The following is a 327-amino-acid chain: uncharacterized protein (327 aa).

In terms of domain architecture, S4 RNA-binding spans 12 to 84; sequence MRIDRYLTQQ…IPITILYEDD (73 aa). The active site involves aspartate 137.

This sequence belongs to the pseudouridine synthase RluA family.

The catalysed reaction is a uridine in RNA = a pseudouridine in RNA. This is an uncharacterized protein from Chlorobaculum parvum (strain DSM 263 / NCIMB 8327) (Chlorobium vibrioforme subsp. thiosulfatophilum).